Here is a 749-residue protein sequence, read N- to C-terminus: DNA topoisomerase 1 (749 aa).

The segment at 1 to 110 is disordered; sequence MSDSEDVALS…PKKEDSVETD (110 aa). A compositionally biased stretch (basic and acidic residues) spans 62–75; that stretch reads LSKEKVNNKVKDEL. Residues 79–94 are compositionally biased toward low complexity; sequence PVTPKKTPKISKTPVS. Residues 101–110 are compositionally biased toward basic and acidic residues; the sequence is PKKEDSVETD. Interaction with DNA regions lie at residues 338–339, 401–406, and 493–495; these read KY, RAGGEK, and TAK. Residues 345–749 enclose the Topo IB-type catalytic domain; sequence NSSIKGISDM…IESTDENWRF (405 aa). Y707 serves as the catalytic O-(3'-phospho-DNA)-tyrosine intermediate.

This sequence belongs to the type IB topoisomerase family.

The protein localises to the nucleus. Its subcellular location is the nucleolus. It localises to the nucleoplasm. It catalyses the reaction ATP-independent breakage of single-stranded DNA, followed by passage and rejoining.. In terms of biological role, releases the supercoiling and torsional tension of DNA introduced during the DNA replication and transcription by transiently cleaving and rejoining one strand of the DNA duplex. Introduces a single-strand break via transesterification at the specific target site 5'-[CT]CCTTp site in duplex DNA. The scissile phosphodiester is attacked by the catalytic tyrosine of the enzyme, resulting in the formation of a DNA-(3'-phosphotyrosyl)-enzyme intermediate and the expulsion of a 5'-OH DNA strand. The free DNA strand then undergoes passage around the unbroken strand thus removing DNA supercoils. Finally, in the religation step, the DNA 5'-OH attacks the covalent intermediate to expel the active-site tyrosine and restore the DNA phosphodiester backbone. This Candidozyma auris (Yeast) protein is DNA topoisomerase 1 (TOP1).